The following is a 53-amino-acid chain: uncharacterized protein (53 aa).

Positions 1–23 (MSILLKILFKLLLLILSITFVIT) are cleaved as a signal peptide.

This is an uncharacterized protein from Acheta domesticus (House cricket).